A 287-amino-acid chain; its full sequence is Inorganic pyrophosphatase (287 aa).

Position 79 (arginine 79) interacts with diphosphate. Mg(2+) contacts are provided by aspartate 116, aspartate 121, and aspartate 153.

Belongs to the PPase family. Requires Mg(2+) as cofactor.

The protein resides in the cytoplasm. The catalysed reaction is diphosphate + H2O = 2 phosphate + H(+). The sequence is that of Inorganic pyrophosphatase (IPP1) from Zygosaccharomyces bailii.